We begin with the raw amino-acid sequence, 70 residues long: Large ribosomal subunit protein eL43 (70 aa).

4 residues coordinate Zn(2+): Cys-36, Cys-39, Cys-55, and Cys-58. The segment at 36 to 58 (CPVCKTTGKVVRIASGVWYCKKC) adopts a C4-type zinc-finger fold.

It belongs to the eukaryotic ribosomal protein eL43 family. Putative zinc-binding subfamily. As to quaternary structure, part of the 50S ribosomal subunit. Zn(2+) is required as a cofactor.

Its function is as follows. Binds to the 23S rRNA. This chain is Large ribosomal subunit protein eL43, found in Sulfurisphaera tokodaii (strain DSM 16993 / JCM 10545 / NBRC 100140 / 7) (Sulfolobus tokodaii).